The sequence spans 200 residues: Serotonin N-acetyltransferase 2, chloroplastic (200 aa).

Residues 1–41 (MQMQAARPRVGVRPRGGIRPFPLPTLSFNNNSNRSACACAC) constitute a chloroplast transit peptide. Residues 55-195 (FAVRRSSTGL…MAFYRSRQQI (141 aa)) enclose the N-acetyltransferase domain.

Its subcellular location is the cytoplasm. The protein resides in the plastid. It localises to the chloroplast. It carries out the reaction serotonin + acetyl-CoA = N-acetylserotonin + CoA + H(+). The enzyme catalyses tyramine + acetyl-CoA = N-acetyltyramine + CoA + H(+). It catalyses the reaction tryptamine + acetyl-CoA = N-acetyltryptamine + CoA + H(+). The catalysed reaction is 5-methoxytryptamine + acetyl-CoA = melatonin + CoA + H(+). It participates in aromatic compound metabolism; melatonin biosynthesis; melatonin from serotonin: step 1/2. Functionally, catalyzes the N-acetylation of serotonin into N-acetylserotonin, the penultimate step in the synthesis of melatonin. Catalyzes in vitro the N-acetylation of tryptamine to produce N-acetyltryptamine, 5-methoxytryptamine to produce melatonin and tyramine to produce N-acetyltyramine. The protein is Serotonin N-acetyltransferase 2, chloroplastic of Oryza sativa subsp. japonica (Rice).